Here is a 248-residue protein sequence, read N- to C-terminus: Aliphatic sulfonates import ATP-binding protein SsuB 2 (248 aa).

One can recognise an ABC transporter domain in the interval 14-230; it reads VRVESLVRSF…DHGHRRFGEI (217 aa). 46 to 53 lines the ATP pocket; that stretch reads GRSGSGKS.

Belongs to the ABC transporter superfamily. Aliphatic sulfonates importer (TC 3.A.1.17.2) family. The complex is composed of two ATP-binding proteins (SsuB), two transmembrane proteins (SsuC) and a solute-binding protein (SsuA).

Its subcellular location is the cell inner membrane. The enzyme catalyses ATP + H2O + aliphatic sulfonate-[sulfonate-binding protein]Side 1 = ADP + phosphate + aliphatic sulfonateSide 2 + [sulfonate-binding protein]Side 1.. Its function is as follows. Part of the ABC transporter complex SsuABC involved in aliphatic sulfonates import. Responsible for energy coupling to the transport system. This chain is Aliphatic sulfonates import ATP-binding protein SsuB 2, found in Mesorhizobium japonicum (strain LMG 29417 / CECT 9101 / MAFF 303099) (Mesorhizobium loti (strain MAFF 303099)).